A 450-amino-acid polypeptide reads, in one-letter code: UDP-N-acetylmuramoylalanine--D-glutamate ligase (450 aa).

116-122 (GSNGKTT) contacts ATP.

Belongs to the MurCDEF family.

The protein resides in the cytoplasm. It carries out the reaction UDP-N-acetyl-alpha-D-muramoyl-L-alanine + D-glutamate + ATP = UDP-N-acetyl-alpha-D-muramoyl-L-alanyl-D-glutamate + ADP + phosphate + H(+). It participates in cell wall biogenesis; peptidoglycan biosynthesis. Its function is as follows. Cell wall formation. Catalyzes the addition of glutamate to the nucleotide precursor UDP-N-acetylmuramoyl-L-alanine (UMA). This Dechloromonas aromatica (strain RCB) protein is UDP-N-acetylmuramoylalanine--D-glutamate ligase.